Consider the following 455-residue polypeptide: Protein indeterminate-domain 7 (455 aa).

The interval 1-52 (MMMNRDILFHQQQQQQMEENMSNLTSASGDQASVSSGNRTETSGSNINQHHQ) is disordered. Residues 17–49 (MEENMSNLTSASGDQASVSSGNRTETSGSNINQ) show a composition bias toward polar residues. S82 carries the phosphoserine modification. C2H2-type zinc fingers lie at residues 92-114 (FICEVCNKGFQRDQNLQLHKRGH) and 134-164 (YVCPEPGCVHHHPSRALGDLTGIKKHFFRKH). The Nuclear localization signal signature appears at 156–163 (IKKHFFRK). The C2H2-type 2; degenerate zinc finger occupies 169–192 (WKCEKCSKKYAVQSDWKAHAKTCG). Positions 171, 174, 187, 191, 198, 200, 213, and 217 each coordinate Zn(2+). The segment at 196 to 219 (YKCDCGTLFSRRDSFITHRAFCDA) adopts a CCHC-type 2; atypical zinc-finger fold. The interval 206 to 218 (RRDSFITHRAFCD) is SHR-binding. Residues 235–351 (QASNSPHHHH…PEEEERSSRS (117 aa)) form a disordered region. Composition is skewed to low complexity over residues 248–265 (QQNIGFSSSSQNIISNSN) and 288–299 (SSNPNPNGNNGN).

The protein localises to the nucleus. Probable transcription factor. This is Protein indeterminate-domain 7 from Arabidopsis thaliana (Mouse-ear cress).